Reading from the N-terminus, the 412-residue chain is Hyaluronidase-3 (412 aa).

An N-terminal signal peptide occupies residues 1-22 (MITQLGLTLVVGLTLCLVHVQA). 5 disulfides stabilise this stretch: Cys42/Cys332, Cys206/Cys221, Cys357/Cys368, Cys362/Cys396, and Cys398/Cys407. Asn69 carries an N-linked (GlcNAc...) asparagine glycan. Glu129 functions as the Proton donor in the catalytic mechanism. Residue Asn216 is glycosylated (N-linked (GlcNAc...) asparagine). The region spanning 353 to 408 (AATACSHQRCHGHGRCSWKDPGQMEAFLHLQPDDNLGAWKSFRCRCYLGWSGPTCL) is the EGF-like domain.

This sequence belongs to the glycosyl hydrolase 56 family. Post-translationally, N-glycosylated.

It localises to the secreted. The protein localises to the cell membrane. The protein resides in the cytoplasmic vesicle. It is found in the secretory vesicle. Its subcellular location is the acrosome. It localises to the endoplasmic reticulum. The protein localises to the early endosome. It catalyses the reaction Random hydrolysis of (1-&gt;4)-linkages between N-acetyl-beta-D-glucosamine and D-glucuronate residues in hyaluronate.. In terms of biological role, facilitates sperm penetration into the layer of cumulus cells surrounding the egg by digesting hyaluronic acid. Involved in induction of the acrosome reaction in the sperm. Involved in follicular atresia, the breakdown of immature ovarian follicles that are not selected to ovulate. Induces ovarian granulosa cell apoptosis, possibly via apoptotic signaling pathway involving CASP8 and CASP3 activation, and poly(ADP-ribose) polymerase (PARP) cleavage. Has no hyaluronidase activity in embryonic fibroblasts in vitro. Has no hyaluronidase activity in granulosa cells in vitro. The sequence is that of Hyaluronidase-3 (Hyal3) from Rattus norvegicus (Rat).